Here is a 45-residue protein sequence, read N- to C-terminus: DNA-directed RNA polymerase subunit Rpo12 (45 aa).

Positions 8, 23, and 26 each coordinate Zn(2+).

The protein belongs to the archaeal Rpo12/eukaryotic RPC10 RNA polymerase subunit family. As to quaternary structure, part of the RNA polymerase complex. The cofactor is Zn(2+).

It is found in the cytoplasm. It carries out the reaction RNA(n) + a ribonucleoside 5'-triphosphate = RNA(n+1) + diphosphate. In terms of biological role, DNA-dependent RNA polymerase (RNAP) catalyzes the transcription of DNA into RNA using the four ribonucleoside triphosphates as substrates. The chain is DNA-directed RNA polymerase subunit Rpo12 from Methanothrix thermoacetophila (strain DSM 6194 / JCM 14653 / NBRC 101360 / PT) (Methanosaeta thermophila).